A 120-amino-acid polypeptide reads, in one-letter code: Large ribosomal subunit protein bL12 (120 aa).

It belongs to the bacterial ribosomal protein bL12 family. In terms of assembly, homodimer. Part of the ribosomal stalk of the 50S ribosomal subunit. Forms a multimeric L10(L12)X complex, where L10 forms an elongated spine to which 2 to 4 L12 dimers bind in a sequential fashion. Binds GTP-bound translation factors.

Functionally, forms part of the ribosomal stalk which helps the ribosome interact with GTP-bound translation factors. Is thus essential for accurate translation. This chain is Large ribosomal subunit protein bL12, found in Lactobacillus gasseri (strain ATCC 33323 / DSM 20243 / BCRC 14619 / CIP 102991 / JCM 1131 / KCTC 3163 / NCIMB 11718 / NCTC 13722 / AM63).